An 83-amino-acid polypeptide reads, in one-letter code: MSGNTGERSFADIITSIRYWVIHSITIPSLFIAGWLFVSTGLAYDVFGSPRPNEYFTESRQEVPLVTGRFDPLEQLDEFTRSF.

Residues 21-35 (VIHSITIPSLFIAGW) traverse the membrane as a helical segment. H23 contributes to the heme binding site.

It belongs to the PsbE/PsbF family. In terms of assembly, heterodimer of an alpha subunit and a beta subunit. PSII is composed of 1 copy each of membrane proteins PsbA, PsbB, PsbC, PsbD, PsbE, PsbF, PsbH, PsbI, PsbJ, PsbK, PsbL, PsbM, PsbT, PsbX, PsbY, PsbZ, Psb30/Ycf12, at least 3 peripheral proteins of the oxygen-evolving complex and a large number of cofactors. It forms dimeric complexes. The cofactor is heme b.

It localises to the plastid. Its subcellular location is the chloroplast thylakoid membrane. Functionally, this b-type cytochrome is tightly associated with the reaction center of photosystem II (PSII). PSII is a light-driven water:plastoquinone oxidoreductase that uses light energy to abstract electrons from H(2)O, generating O(2) and a proton gradient subsequently used for ATP formation. It consists of a core antenna complex that captures photons, and an electron transfer chain that converts photonic excitation into a charge separation. In Pinus koraiensis (Korean pine), this protein is Cytochrome b559 subunit alpha.